The chain runs to 456 residues: Chromosomal replication initiator protein DnaA (456 aa).

The interval 1-79 is domain I, interacts with DnaA modulators; that stretch reads MSQEIWADVL…QHPQVSFQVL (79 aa). Residues 79 to 112 form a domain II region; it reads LPASQDALLLPSDPPPAPISPGRAPAPPPADNRK. Residues 89 to 112 are disordered; sequence PSDPPPAPISPGRAPAPPPADNRK. The span at 90 to 108 shows a compositional bias: pro residues; it reads SDPPPAPISPGRAPAPPPA. The tract at residues 113–329 is domain III, AAA+ region; that stretch reads TLNPKYTFEN…GALMRVVAFS (217 aa). ATP is bound by residues Gly157, Gly159, Lys160, and Thr161. Residues 330-456 form a domain IV, binds dsDNA region; sequence SLNNVPFSRA…KGLEDEDSRA (127 aa).

It belongs to the DnaA family. In terms of assembly, oligomerizes as a right-handed, spiral filament on DNA at oriC.

The protein resides in the cytoplasm. Plays an essential role in the initiation and regulation of chromosomal replication. ATP-DnaA binds to the origin of replication (oriC) to initiate formation of the DNA replication initiation complex once per cell cycle. Binds the DnaA box (a 9 base pair repeat at the origin) and separates the double-stranded (ds)DNA. Forms a right-handed helical filament on oriC DNA; dsDNA binds to the exterior of the filament while single-stranded (ss)DNA is stabiized in the filament's interior. The ATP-DnaA-oriC complex binds and stabilizes one strand of the AT-rich DNA unwinding element (DUE), permitting loading of DNA polymerase. After initiation quickly degrades to an ADP-DnaA complex that is not apt for DNA replication. Binds acidic phospholipids. This Deinococcus deserti (strain DSM 17065 / CIP 109153 / LMG 22923 / VCD115) protein is Chromosomal replication initiator protein DnaA.